We begin with the raw amino-acid sequence, 542 residues long: CTP synthase (542 aa).

The amidoligase domain stretch occupies residues 1-265 (MTRYVFITGG…DREVLGHFGL (265 aa)). Ser13 lines the CTP pocket. Ser13 contacts UTP. ATP is bound by residues 14-19 (SLGKGL) and Asp71. 2 residues coordinate Mg(2+): Asp71 and Glu139. CTP contacts are provided by residues 146-148 (DIE), 186-191 (KTKPTQ), and Lys222. UTP is bound by residues 186–191 (KTKPTQ) and Lys222. Residues 291 to 541 (SIAIVGKYTG…VGAAIEQSRL (251 aa)) enclose the Glutamine amidotransferase type-1 domain. Gly353 is a binding site for L-glutamine. Cys380 functions as the Nucleophile; for glutamine hydrolysis in the catalytic mechanism. L-glutamine-binding positions include 381–384 (FGMQ), Glu404, and Arg469. Residues His514 and Glu516 contribute to the active site.

The protein belongs to the CTP synthase family. Homotetramer.

The catalysed reaction is UTP + L-glutamine + ATP + H2O = CTP + L-glutamate + ADP + phosphate + 2 H(+). It carries out the reaction L-glutamine + H2O = L-glutamate + NH4(+). The enzyme catalyses UTP + NH4(+) + ATP = CTP + ADP + phosphate + 2 H(+). Its pathway is pyrimidine metabolism; CTP biosynthesis via de novo pathway; CTP from UDP: step 2/2. Its activity is regulated as follows. Allosterically activated by GTP, when glutamine is the substrate; GTP has no effect on the reaction when ammonia is the substrate. The allosteric effector GTP functions by stabilizing the protein conformation that binds the tetrahedral intermediate(s) formed during glutamine hydrolysis. Inhibited by the product CTP, via allosteric rather than competitive inhibition. In terms of biological role, catalyzes the ATP-dependent amination of UTP to CTP with either L-glutamine or ammonia as the source of nitrogen. Regulates intracellular CTP levels through interactions with the four ribonucleotide triphosphates. This is CTP synthase from Methylobacterium radiotolerans (strain ATCC 27329 / DSM 1819 / JCM 2831 / NBRC 15690 / NCIMB 10815 / 0-1).